A 904-amino-acid chain; its full sequence is Phosphoenolpyruvate carboxylase (904 aa).

Residues 52–71 (ISRRESDAPPSTLSEQLTGR) are disordered. Active-site residues include H151 and K570.

This sequence belongs to the PEPCase type 1 family. Mg(2+) serves as cofactor.

It carries out the reaction oxaloacetate + phosphate = phosphoenolpyruvate + hydrogencarbonate. Functionally, forms oxaloacetate, a four-carbon dicarboxylic acid source for the tricarboxylic acid cycle. The polypeptide is Phosphoenolpyruvate carboxylase (Xanthomonas oryzae pv. oryzae (strain MAFF 311018)).